The following is a 146-amino-acid chain: Transcriptional regulator MraZ (146 aa).

SpoVT-AbrB domains follow at residues 9–55 and 81–124; these read ASAL…PRPA and AMDV…DVQR.

The protein belongs to the MraZ family. In terms of assembly, forms oligomers.

Its subcellular location is the cytoplasm. It localises to the nucleoid. This chain is Transcriptional regulator MraZ, found in Methylibium petroleiphilum (strain ATCC BAA-1232 / LMG 22953 / PM1).